Reading from the N-terminus, the 812-residue chain is Chromosome alignment-maintaining phosphoprotein 1 (812 aa).

N-acetylmethionine is present on Met-1. The span at 86 to 105 shows a compositional bias: basic and acidic residues; it reads ASPDKWNDKPKNQLNKETDP. 2 disordered regions span residues 86–124 and 136–546; these read ASPD…SAEP and KLGS…PEAR. Phosphoserine is present on residues Ser-87, Ser-108, Ser-173, Ser-184, Ser-204, Ser-214, and Ser-217. Residues 202 to 213 show a composition bias toward pro residues; that stretch reads VPSPEPQKPAPV. A compositionally biased stretch (polar residues) spans 220–233; it reads ATLSNPKPQKQSHF. Residues Ser-244, Ser-247, Ser-253, Ser-264, Ser-275, Ser-282, Ser-286, Ser-297, Ser-308, Ser-319, Ser-344, Ser-355, Ser-376, Ser-382, and Ser-386 each carry the phosphoserine modification. The tract at residues 271 to 490 is mediates interaction with MAD2L2; it reads ARTTSPEPRK…KSSFFIEPQK (220 aa). Over residues 284-297 the composition is skewed to pro residues; that stretch reads SESPEPWKPFPAVS. Residues 336 to 361 are compositionally biased toward pro residues; the sequence is PAKPAPSVSPGPWKPIPSVSPGPWKP. Over residues 363 to 392 the composition is skewed to low complexity; that stretch reads PSVSSASWKSSSVSPSSWKSPPASPESWKS. Thr-403 carries the post-translational modification Phosphothreonine. A phosphoserine mark is found at Ser-405, Ser-416, Ser-427, Ser-432, Ser-436, Ser-443, Ser-445, and Ser-452. Residues 451–590 are mediates localization to the spindle and the kinetochore and is required for the attachment of spindle microtubules to the kinetochore; the sequence is LSPDQRKTSP…ELQIDAIDDQ (140 aa). Residue Thr-458 is modified to Phosphothreonine. Residues Ser-459, Ser-462, Ser-472, and Ser-476 each carry the phosphoserine modification. At Lys-490 the chain carries N6-acetyllysine; alternate. Lys-490 participates in a covalent cross-link: Glycyl lysine isopeptide (Lys-Gly) (interchain with G-Cter in SUMO2); alternate. A compositionally biased stretch (low complexity) spans 499-512; sequence PGPSGPSESPKAAS. Residues Ser-507, Ser-512, and Ser-542 each carry the phosphoserine modification. Lys-565 is covalently cross-linked (Glycyl lysine isopeptide (Lys-Gly) (interchain with G-Cter in SUMO2)). Phosphoserine is present on residues Ser-572 and Ser-603. Positions 591–812 are mediates localization to the chromosome and the spindle and negatively regulates chromosome alignment; it reads KCDILVQEEL…LEPPLEEQQI (222 aa). A Glycyl lysine isopeptide (Lys-Gly) (interchain with G-Cter in SUMO2) cross-link involves residue Lys-606. A phosphoserine mark is found at Ser-615, Ser-626, Ser-627, and Ser-632. Residue Lys-638 forms a Glycyl lysine isopeptide (Lys-Gly) (interchain with G-Cter in SUMO2) linkage. Phosphoserine occurs at positions 651, 652, and 653. Lys-670 participates in a covalent cross-link: Glycyl lysine isopeptide (Lys-Gly) (interchain with G-Cter in SUMO2). Ser-675 carries the phosphoserine modification. Lys-689 is covalently cross-linked (Glycyl lysine isopeptide (Lys-Gly) (interchain with G-Cter in SUMO2)). Ser-736 carries the post-translational modification Phosphoserine. The C2H2-type zinc-finger motif lies at 738–760; that stretch reads YKCTICGKAFLLESLLKNHVAAH.

Interacts with MAD2L2. Interacts with POGZ, CBX1, CBX3 and CBX5. Phosphorylated by CDK1. Mitotic phosphorylation is required for the attachment of spindle microtubules to the kinetochore.

It localises to the nucleus. The protein resides in the chromosome. The protein localises to the centromere. It is found in the kinetochore. Its subcellular location is the cytoplasm. It localises to the cytoskeleton. The protein resides in the spindle. Its function is as follows. Required for proper alignment of chromosomes at metaphase and their accurate segregation during mitosis. Involved in the maintenance of spindle microtubules attachment to the kinetochore during sister chromatid biorientation. May recruit CENPE and CENPF to the kinetochore. The chain is Chromosome alignment-maintaining phosphoprotein 1 (CHAMP1) from Homo sapiens (Human).